The following is a 1227-amino-acid chain: Methionine synthase (1227 aa).

Residues 2 to 325 (SSKVEQLRAQ…QHIAAMSRAV (324 aa)) form the Hcy-binding domain. 3 residues coordinate Zn(2+): cysteine 247, cysteine 310, and cysteine 311. The Pterin-binding domain maps to 356–617 (FVNVGERTNV…LPAELRDAVE (262 aa)). The B12-binding N-terminal domain maps to 650-744 (QQAEWRSWEV…FIEASKEQGK (95 aa)). Methylcob(III)alamin contacts are provided by residues glutamate 694, 756–760 (GDVHD), histidine 759, serine 804, threonine 808, and alanine 860. The 136-residue stretch at 746 to 881 (NGKMVIATVK…SDTQRDDFVA (136 aa)) folds into the B12-binding domain. Positions 897-1227 (KKPRTPPVTL…LAPNLGYDAD (331 aa)) constitute an AdoMet activation domain. S-adenosyl-L-methionine contacts are provided by residues aspartate 946, arginine 1134, and 1189–1190 (YY).

This sequence belongs to the vitamin-B12 dependent methionine synthase family. Requires methylcob(III)alamin as cofactor. Zn(2+) serves as cofactor.

It catalyses the reaction (6S)-5-methyl-5,6,7,8-tetrahydrofolate + L-homocysteine = (6S)-5,6,7,8-tetrahydrofolate + L-methionine. It participates in amino-acid biosynthesis; L-methionine biosynthesis via de novo pathway; L-methionine from L-homocysteine (MetH route): step 1/1. In terms of biological role, catalyzes the transfer of a methyl group from methyl-cobalamin to homocysteine, yielding enzyme-bound cob(I)alamin and methionine. Subsequently, remethylates the cofactor using methyltetrahydrofolate. This Escherichia coli (strain K12) protein is Methionine synthase (metH).